Consider the following 163-residue polypeptide: 3-isopropylmalate dehydratase small subunit (163 aa).

Belongs to the LeuD family. LeuD type 2 subfamily. Heterodimer of LeuC and LeuD.

It catalyses the reaction (2R,3S)-3-isopropylmalate = (2S)-2-isopropylmalate. Its pathway is amino-acid biosynthesis; L-leucine biosynthesis; L-leucine from 3-methyl-2-oxobutanoate: step 2/4. In terms of biological role, catalyzes the isomerization between 2-isopropylmalate and 3-isopropylmalate, via the formation of 2-isopropylmaleate. In Thermococcus kodakarensis (strain ATCC BAA-918 / JCM 12380 / KOD1) (Pyrococcus kodakaraensis (strain KOD1)), this protein is 3-isopropylmalate dehydratase small subunit.